The following is a 75-amino-acid chain: Small capsomere-interacting protein (75 aa).

It belongs to the herpesviridae small capsomere-interacting protein family. As to quaternary structure, interacts with the major capsid protein/MCP.

The protein resides in the virion. The protein localises to the host nucleus. Its function is as follows. Participates in the assembly of the infectious particles by decorating the outer surface of the capsid shell and thus forming a layer between the capsid and the tegument. Complexes composed of the capsid protein VP5 and UL48A assemble together in the host cytoplasm and are translocated to the nucleus, where they accumulate and participate in capsid assembly. Functionally, participates in the assembly of the infectious particles by decorating the outer surface of the capsid shell and thus forming a layer between the capsid and the tegument. Complexes composed of the major capsid protein and small capsomere-interacting protein/SCP assemble together in the host cytoplasm and are translocated to the nucleus, where they accumulate and participate in capsid assembly. The chain is Small capsomere-interacting protein from Homo sapiens (Human).